The following is a 167-amino-acid chain: Zymogen granule membrane protein 16 (167 aa).

The first 16 residues, 1 to 16, serve as a signal peptide directing secretion; that stretch reads MLAVALLVLLCASASA. In terms of domain architecture, Jacalin-type lectin spans 24–159; it reads SSYSGEYGGK…IDSISLHWDT (136 aa).

This sequence belongs to the jacalin lectin family.

It is found in the secreted. The protein resides in the extracellular space. The protein localises to the extracellular matrix. Its subcellular location is the zymogen granule lumen. It localises to the golgi apparatus lumen. May play a role in protein trafficking. May act as a linker molecule between the submembranous matrix on the luminal side of zymogen granule membrane (ZGM) and aggregated secretory proteins during granule formation in the TGN. This chain is Zymogen granule membrane protein 16 (Zg16), found in Mus musculus (Mouse).